A 475-amino-acid chain; its full sequence is Ribulose bisphosphate carboxylase large chain (475 aa).

Positions 1–2 are excised as a propeptide; the sequence is MS. Pro3 carries the N-acetylproline modification. The residue at position 14 (Lys14) is an N6,N6,N6-trimethyllysine. The substrate site is built by Asn123 and Thr173. Lys175 acts as the Proton acceptor in catalysis. Lys177 is a binding site for substrate. Mg(2+) is bound by residues Lys201, Asp203, and Glu204. At Lys201 the chain carries N6-carboxylysine. His294 functions as the Proton acceptor in the catalytic mechanism. Substrate is bound by residues Arg295, His327, and Ser379.

This sequence belongs to the RuBisCO large chain family. Type I subfamily. In terms of assembly, heterohexadecamer of 8 large chains and 8 small chains; disulfide-linked. The disulfide link is formed within the large subunit homodimers. It depends on Mg(2+) as a cofactor. Post-translationally, the disulfide bond which can form in the large chain dimeric partners within the hexadecamer appears to be associated with oxidative stress and protein turnover.

The protein resides in the plastid. The protein localises to the chloroplast. The catalysed reaction is 2 (2R)-3-phosphoglycerate + 2 H(+) = D-ribulose 1,5-bisphosphate + CO2 + H2O. The enzyme catalyses D-ribulose 1,5-bisphosphate + O2 = 2-phosphoglycolate + (2R)-3-phosphoglycerate + 2 H(+). Its function is as follows. RuBisCO catalyzes two reactions: the carboxylation of D-ribulose 1,5-bisphosphate, the primary event in carbon dioxide fixation, as well as the oxidative fragmentation of the pentose substrate in the photorespiration process. Both reactions occur simultaneously and in competition at the same active site. This Lotus japonicus (Lotus corniculatus var. japonicus) protein is Ribulose bisphosphate carboxylase large chain.